Consider the following 261-residue polypeptide: Anamorsin homolog (261 aa).

Residues 4 to 134 (VQENNQVLYI…EIGSAAKLSL (131 aa)) are N-terminal SAM-like domain. Residues 134–173 (LGGGANKAKVAAVWKLDVDDDGEAEERIDEDELLDEEDKV) are linker. Cysteine 183, cysteine 192, cysteine 195, and cysteine 197 together coordinate [2Fe-2S] cluster. A fe-S binding site A region spans residues 183–197 (CGTTGKRKACKDCSC). [4Fe-4S] cluster contacts are provided by cysteine 222, cysteine 225, cysteine 233, and cysteine 236. Short sequence motifs (cx2C motif) lie at residues 222–225 (CGSC) and 233–236 (CATC). The interval 222–236 (CGSCYLGDAFRCATC) is fe-S binding site B.

This sequence belongs to the anamorsin family. In terms of assembly, monomer. Requires [2Fe-2S] cluster as cofactor. [4Fe-4S] cluster is required as a cofactor.

The protein localises to the cytoplasm. The protein resides in the mitochondrion intermembrane space. In terms of biological role, component of the cytosolic iron-sulfur (Fe-S) protein assembly (CIA) machinery. Required for the maturation of extramitochondrial Fe-S proteins. Part of an electron transfer chain functioning in an early step of cytosolic Fe-S biogenesis, facilitating the de novo assembly of a [4Fe-4S] cluster on the cytosolic Fe-S scaffold complex. Electrons are transferred from NADPH via a FAD- and FMN-containing diflavin oxidoreductase. Together with the diflavin oxidoreductase, also required for the assembly of the diferric tyrosyl radical cofactor of ribonucleotide reductase (RNR), probably by providing electrons for reduction during radical cofactor maturation in the catalytic small subunit. This Culex quinquefasciatus (Southern house mosquito) protein is Anamorsin homolog.